The following is a 1026-amino-acid chain: Probable DNA-directed RNA polymerase II subunit RPB1 homolog (1026 aa).

Zn(2+) contacts are provided by cysteine 62, cysteine 65, cysteine 72, histidine 75, cysteine 102, cysteine 105, and cysteine 142. Mg(2+)-binding residues include aspartate 588, aspartate 590, and aspartate 592.

Belongs to the RNA polymerase beta' chain family.

It catalyses the reaction RNA(n) + a ribonucleoside 5'-triphosphate = RNA(n+1) + diphosphate. Functionally, component of the DNA-dependent RNA polymerase that catalyzes the transcription of DNA into RNA using the four ribonucleoside triphosphates as substrates. Largest and catalytic component of RNA polymerase II which synthesizes mRNA precursors and many functional non-coding RNAs. Forms the polymerase active center together with the second largest subunit. The polypeptide is Probable DNA-directed RNA polymerase II subunit RPB1 homolog (Acheta domesticus (House cricket)).